The following is a 133-amino-acid chain: Large ribosomal subunit protein eL19 (133 aa).

The interval 55–83 is disordered; sequence RGISGARKKPRRKGPGSRKGGKYSKLPRK. Basic residues predominate over residues 60–83; it reads ARKKPRRKGPGSRKGGKYSKLPRK.

The protein belongs to the eukaryotic ribosomal protein eL19 family. As to quaternary structure, part of the 50S ribosomal subunit.

In terms of biological role, binds to the 23S rRNA. The protein is Large ribosomal subunit protein eL19 of Korarchaeum cryptofilum (strain OPF8).